A 444-amino-acid chain; its full sequence is Deoxyguanosinetriphosphate triphosphohydrolase-like protein (444 aa).

A disordered region spans residues 1–26 (MTESLWHERRLTEEKKRRNDHRSPYQ). The HD domain maps to 59–250 (RLTHSLEVSQ…MELADDIAYA (192 aa)).

Belongs to the dGTPase family. Type 2 subfamily.

In Shewanella sediminis (strain HAW-EB3), this protein is Deoxyguanosinetriphosphate triphosphohydrolase-like protein.